Consider the following 256-residue polypeptide: Triosephosphate isomerase (256 aa).

Residue 9-11 (NWK) participates in substrate binding. Histidine 97 functions as the Electrophile in the catalytic mechanism. Glutamate 169 acts as the Proton acceptor in catalysis. Substrate is bound by residues glycine 175, serine 214, and 235–236 (GG).

This sequence belongs to the triosephosphate isomerase family. Homodimer.

It localises to the cytoplasm. It catalyses the reaction D-glyceraldehyde 3-phosphate = dihydroxyacetone phosphate. Its pathway is carbohydrate biosynthesis; gluconeogenesis. It functions in the pathway carbohydrate degradation; glycolysis; D-glyceraldehyde 3-phosphate from glycerone phosphate: step 1/1. Its function is as follows. Involved in the gluconeogenesis. Catalyzes stereospecifically the conversion of dihydroxyacetone phosphate (DHAP) to D-glyceraldehyde-3-phosphate (G3P). The protein is Triosephosphate isomerase of Vibrio vulnificus (strain CMCP6).